The sequence spans 443 residues: 23S rRNA (uracil(1939)-C(5))-methyltransferase RlmD (443 aa).

Positions Ser-12 to Asn-70 constitute a TRAM domain. [4Fe-4S] cluster-binding residues include Cys-83, Cys-89, Cys-92, and Cys-171. The S-adenosyl-L-methionine site is built by Gln-277, Phe-306, Asn-311, Glu-327, Asp-354, and Asp-374. Cys-400 (nucleophile) is an active-site residue.

It belongs to the class I-like SAM-binding methyltransferase superfamily. RNA M5U methyltransferase family. RlmD subfamily.

The enzyme catalyses uridine(1939) in 23S rRNA + S-adenosyl-L-methionine = 5-methyluridine(1939) in 23S rRNA + S-adenosyl-L-homocysteine + H(+). Its function is as follows. Catalyzes the formation of 5-methyl-uridine at position 1939 (m5U1939) in 23S rRNA. The chain is 23S rRNA (uracil(1939)-C(5))-methyltransferase RlmD from Shewanella woodyi (strain ATCC 51908 / MS32).